A 518-amino-acid polypeptide reads, in one-letter code: Dihydropyrimidinase 2 (518 aa).

Zn(2+) is bound by residues H59, H61, and K152. Residue K152 is modified to N6-carboxylysine. Y157 is a binding site for substrate. Residues H185 and H241 each coordinate Zn(2+). S291 serves as a coordination point for substrate. Position 319 (D319) interacts with Zn(2+). A substrate-binding site is contributed by N340.

This sequence belongs to the metallo-dependent hydrolases superfamily. Hydantoinase/dihydropyrimidinase family. Homotetramer. Zn(2+) serves as cofactor. In terms of processing, carboxylation allows a single lysine to coordinate two zinc ions.

The enzyme catalyses 5,6-dihydrouracil + H2O = 3-(carbamoylamino)propanoate + H(+). In Caenorhabditis briggsae, this protein is Dihydropyrimidinase 2 (dhp-2).